Reading from the N-terminus, the 416-residue chain is UDP-N-acetylmuramoylalanine--D-glutamate ligase (416 aa).

ATP is bound at residue 104 to 110 (GSNGKST).

It belongs to the MurCDEF family.

Its subcellular location is the cytoplasm. The enzyme catalyses UDP-N-acetyl-alpha-D-muramoyl-L-alanine + D-glutamate + ATP = UDP-N-acetyl-alpha-D-muramoyl-L-alanyl-D-glutamate + ADP + phosphate + H(+). The protein operates within cell wall biogenesis; peptidoglycan biosynthesis. In terms of biological role, cell wall formation. Catalyzes the addition of glutamate to the nucleotide precursor UDP-N-acetylmuramoyl-L-alanine (UMA). This Francisella tularensis subsp. holarctica (strain FTNF002-00 / FTA) protein is UDP-N-acetylmuramoylalanine--D-glutamate ligase.